The following is a 407-amino-acid chain: Peptidase T (407 aa).

Histidine 82 contributes to the Zn(2+) binding site. Aspartate 84 is a catalytic residue. Aspartate 143 lines the Zn(2+) pocket. The Proton acceptor role is filled by glutamate 177. 3 residues coordinate Zn(2+): glutamate 178, aspartate 200, and histidine 382.

Belongs to the peptidase M20B family. Zn(2+) is required as a cofactor.

It is found in the cytoplasm. It carries out the reaction Release of the N-terminal residue from a tripeptide.. Functionally, cleaves the N-terminal amino acid of tripeptides. This Streptococcus pyogenes serotype M49 (strain NZ131) protein is Peptidase T.